A 765-amino-acid chain; its full sequence is Zinc finger and BTB domain-containing protein 49 (765 aa).

The region spanning 25-91 (CDCMLVVKGV…MYTSHLDLNQ (67 aa)) is the BTB domain. 2 disordered regions span residues 165–203 (QQNKTLDESHPHASPSVNRHHSAGEISKQAPDTSDGSCT) and 275–294 (NFLAQPVNDSAPHPESDATC). 7 C2H2-type zinc fingers span residues 395-417 (YACELCGKPFKHPSNLELHKRSH), 423-445 (FECNICGKHFSQAGNLQTHLRRH), 451-473 (YICEICGKRFAASGDVQRHIIIH), 479-501 (HLCDICGRGFSNFSNLKEHKKTH), 507-529 (FTCDECGKSFNMQRKLVKHRIRH), 535-557 (YSCSACGKCFGGSGDLRRHVRTH), and 563-585 (YTCEICNKCFTRSAVLRRHKKMH).

This sequence belongs to the krueppel C2H2-type zinc-finger protein family. Isoform 1 interacts with EP300 and KAT5/Tip60. The interaction with EP300 is direct and leads to synergistic induction of CDKN1A. On the CDKN1A promoter, forms a complex with ZBTB17/Miz-1; this interaction leads to additive CDKN1A transactivation. Isoform 3 also interacts with ZBTB17; this interaction may block ZBTB17 repressor activity. Highly expressed in normal epidermis and in other epithelial tissues, including in colon and lung. Tends to be down-regulated in colon, lung and skin cancer tissues.

The protein localises to the cytoplasm. It is found in the nucleus. Functionally, transcription factor. Inhibits cell proliferation by activating either CDKN1A/p21 transcription or RB1 transcription. Its function is as follows. Binds CDKN1A promoter and activates its transcription; this activity is further potentiated in the presence of EP300 (synergistic) and ZBTB17/Miz-1 (additive). In terms of biological role, activates RB1 transcription most probably by antagonizing ZBTB17 repression of RB1. Does not bind directly RB1 promoter. In Homo sapiens (Human), this protein is Zinc finger and BTB domain-containing protein 49 (ZBTB49).